A 247-amino-acid chain; its full sequence is Cytochrome c oxidase subunit 2 (247 aa).

Residues 1 to 38 are Mitochondrial intermembrane-facing; the sequence is MREMMMNNMLNDVPTPWAMYFQDSATPNMEGMMELHNN. Residues 39–55 traverse the membrane as a helical segment; the sequence is VLFYLCVMLGFVTYMLY. Residues 56–86 lie on the Mitochondrial matrix side of the membrane; sequence NVMTVYNKSAMAYKYMNHGQFMEMMWTTFPA. Residues 87 to 103 traverse the membrane as a helical segment; sequence MMLLMMAFPSFMLLYMC. Topologically, residues 104–247 are mitochondrial intermembrane; that stretch reads DEVMAPAMTI…VDFLAWIDEQ (144 aa). Residues H182, C217, E219, C221, H225, and M228 each coordinate Cu cation. Position 219 (E219) interacts with Mg(2+).

This sequence belongs to the cytochrome c oxidase subunit 2 family. As to quaternary structure, component of the cytochrome c oxidase (complex IV, CIV), a multisubunit enzyme composed of a catalytic core of 3 subunits and several supernumerary subunits. The complex exists as a monomer or a dimer and forms supercomplexes (SCs) in the inner mitochondrial membrane with ubiquinol-cytochrome c oxidoreductase (cytochrome b-c1 complex, complex III, CIII). The cofactor is Cu cation.

The protein localises to the mitochondrion inner membrane. It carries out the reaction 4 Fe(II)-[cytochrome c] + O2 + 8 H(+)(in) = 4 Fe(III)-[cytochrome c] + 2 H2O + 4 H(+)(out). In terms of biological role, component of the cytochrome c oxidase, the last enzyme in the mitochondrial electron transport chain which drives oxidative phosphorylation. The respiratory chain contains 3 multisubunit complexes succinate dehydrogenase (complex II, CII), ubiquinol-cytochrome c oxidoreductase (cytochrome b-c1 complex, complex III, CIII) and cytochrome c oxidase (complex IV, CIV), that cooperate to transfer electrons derived from NADH and succinate to molecular oxygen, creating an electrochemical gradient over the inner membrane that drives transmembrane transport and the ATP synthase. Cytochrome c oxidase is the component of the respiratory chain that catalyzes the reduction of oxygen to water. Electrons originating from reduced cytochrome c in the intermembrane space (IMS) are transferred via the dinuclear copper A center (CU(A)) of subunit 2 and heme A of subunit 1 to the active site in subunit 1, a binuclear center (BNC) formed by heme A3 and copper B (CU(B)). The BNC reduces molecular oxygen to 2 water molecules using 4 electrons from cytochrome c in the IMS and 4 protons from the mitochondrial matrix. This chain is Cytochrome c oxidase subunit 2 (COX2), found in Eeniella nana (Yeast).